Consider the following 479-residue polypeptide: GTPase Der (479 aa).

EngA-type G domains lie at 3–167 (FTLA…EAAA) and 191–366 (LQIA…ATWN). GTP-binding positions include 9–16 (GRPNVGKS), 56–60 (DTAGL), 119–122 (NKAE), 197–204 (GRPNAGKS), 244–248 (DTAGM), and 309–312 (NKWD). Positions 367–453 (TRISTARLNQ…RLWMRSQADD (87 aa)) constitute a KH-like domain. The disordered stretch occupies residues 449-479 (SQADDNPYKNRKKSTPSRLNKHVRKGETKKG). The segment covering 457-472 (KNRKKSTPSRLNKHVR) has biased composition (basic residues).

It belongs to the TRAFAC class TrmE-Era-EngA-EngB-Septin-like GTPase superfamily. EngA (Der) GTPase family. As to quaternary structure, associates with the 50S ribosomal subunit.

Functionally, GTPase that plays an essential role in the late steps of ribosome biogenesis. The polypeptide is GTPase Der (Jannaschia sp. (strain CCS1)).